The chain runs to 412 residues: Argininosuccinate synthase (412 aa).

10–18 (AYSGGLDTS) provides a ligand contact to ATP. Tyrosine 89 serves as a coordination point for L-citrulline. Glycine 119 serves as a coordination point for ATP. L-aspartate is bound by residues threonine 121, asparagine 125, and aspartate 126. L-citrulline is bound at residue asparagine 125. Residues arginine 129, serine 177, glutamate 261, and tyrosine 273 each contribute to the L-citrulline site.

The protein belongs to the argininosuccinate synthase family. Type 1 subfamily. As to quaternary structure, homotetramer.

The protein localises to the cytoplasm. It catalyses the reaction L-citrulline + L-aspartate + ATP = 2-(N(omega)-L-arginino)succinate + AMP + diphosphate + H(+). It functions in the pathway amino-acid biosynthesis; L-arginine biosynthesis; L-arginine from L-ornithine and carbamoyl phosphate: step 2/3. In Bifidobacterium longum (strain NCC 2705), this protein is Argininosuccinate synthase.